We begin with the raw amino-acid sequence, 372 residues long: High-affinity lysophosphatidic acid receptor (372 aa).

At 1–38 (MGCNNTALDNCMLPNLSIATAPLDLRFAFSTPLRMLLA) the chain is on the extracellular side. N-linked (GlcNAc...) asparagine glycans are attached at residues Asn4 and Asn15. A helical membrane pass occupies residues 39–59 (IIMILMIAIAFLGNAIVCLIV). Residues 60–80 (YQKPAMRSAINLLLATLAFSD) lie on the Cytoplasmic side of the membrane. The chain crosses the membrane as a helical span at residues 81–101 (IMLSLFCMPFTAVTIITGSWL). Residues 102–108 (FGTQFCQ) are Extracellular-facing. Residues 109 to 129 (ISAMLYWFFVLEGVAILLIIS) form a helical membrane-spanning segment. Topologically, residues 130–149 (VDRFLIIVQRQDKLNPHRAK) are cytoplasmic. A helical membrane pass occupies residues 150–170 (IMIAASWVLSFCISLPSVVGW). Topologically, residues 171–198 (TLVEVPTRAPQCVLGYTEFSADRVYAVM) are extracellular. Residues 199–219 (LIVAVFFIPFSVMLYSYLCIL) form a helical membrane-spanning segment. The Cytoplasmic portion of the chain corresponds to 220-268 (NTVRRNAVRIHTHADSLCLSQVSKLGLMGLQRPHQMNVDMSFKTRAFTT). A helical membrane pass occupies residues 269–289 (ILILFIGFSLCWLPHSVFSLL). Residues 290 to 301 (SVFSRTFYYSSS) lie on the Extracellular side of the membrane. The chain crosses the membrane as a helical span at residues 302–324 (FYSISTCTLWLTYLKSVFNPVIY). Over 325-372 (CWRIKKFREACLEFMPKTFKILPNVRGRTRRRIRPSTIYVCGEHQSAV) the chain is Cytoplasmic.

It belongs to the G-protein coupled receptor 1 family. Ubiquitously expressed.

Its subcellular location is the cell membrane. Highly selective receptor for lysophosphatidic acid (LPA), a mediator of diverse cellular activities. The chain is High-affinity lysophosphatidic acid receptor from Xenopus laevis (African clawed frog).